Reading from the N-terminus, the 503-residue chain is Glutamate--tRNA ligase (503 aa).

The short motif at 14–24 is the 'HIGH' region element; that stretch reads PSPTGSLHIGG. The short motif at 261-265 is the 'KMSKS' region element; sequence KLSKR. Residue K264 participates in ATP binding.

Belongs to the class-I aminoacyl-tRNA synthetase family. Glutamate--tRNA ligase type 1 subfamily. In terms of assembly, monomer.

The protein resides in the cytoplasm. It catalyses the reaction tRNA(Glu) + L-glutamate + ATP = L-glutamyl-tRNA(Glu) + AMP + diphosphate. Functionally, catalyzes the attachment of glutamate to tRNA(Glu) in a two-step reaction: glutamate is first activated by ATP to form Glu-AMP and then transferred to the acceptor end of tRNA(Glu). The sequence is that of Glutamate--tRNA ligase from Chloroflexus aurantiacus (strain ATCC 29366 / DSM 635 / J-10-fl).